Consider the following 460-residue polypeptide: MALNVVILAAGKGTRMRSDLPKVLHPIAHKSMVQHVIDTAHKVGSDAIQLVYGYGADKLQASLGEQQLNWVLQAEQLGTGHAVAQASPHIADNDTVLILYGDVPLIQQSTLEALLAALPENGVAILTVNLADPMGYGRIVRTPCKGQEQGKVVGIIEQKDATAEQLLINEINTGIMAVPGKQLKIWLSRLSNNNAQGEYYLTDIIAMAHADGVAIDTAQPQSAIEVEGANNRVQLAQLERAYQAREAEKLMLAGANLRDPSRIDIRGDVTVGMDVMIDINVIFEGKVTLGNNVTIGAGAILIDCEIADNAEIKPYSIIEGAKLGVAASAGPFARLRPGAELKQDAHIGNFVEVKKAVIGVGSKAGHLAYLGDAVIGDGVNIGAGTITCNYDGANKHLTVIEDNVFVGSDTQLVAPVTISKGATLGAGSTITRDVGENELVITRVKQKHLTGWQRPVKIKK.

Residues 1–232 (MALNVVILAA…AIEVEGANNR (232 aa)) form a pyrophosphorylase region. Residues 8–11 (LAAG), Lys22, Gln73, 78–79 (GT), 100–102 (YGD), Gly137, Glu157, Asn172, and Asn230 each bind UDP-N-acetyl-alpha-D-glucosamine. Asp102 contributes to the Mg(2+) binding site. A Mg(2+)-binding site is contributed by Asn230. The linker stretch occupies residues 233-253 (VQLAQLERAYQAREAEKLMLA). An N-acetyltransferase region spans residues 254–460 (GANLRDPSRI…GWQRPVKIKK (207 aa)). UDP-N-acetyl-alpha-D-glucosamine-binding residues include Arg336 and Lys354. His366 functions as the Proton acceptor in the catalytic mechanism. UDP-N-acetyl-alpha-D-glucosamine is bound by residues Tyr369 and Asn380. Residues Ala383, 389–390 (NY), Ser408, Ala426, and Arg443 contribute to the acetyl-CoA site.

This sequence in the N-terminal section; belongs to the N-acetylglucosamine-1-phosphate uridyltransferase family. The protein in the C-terminal section; belongs to the transferase hexapeptide repeat family. In terms of assembly, homotrimer. It depends on Mg(2+) as a cofactor.

It is found in the cytoplasm. The enzyme catalyses alpha-D-glucosamine 1-phosphate + acetyl-CoA = N-acetyl-alpha-D-glucosamine 1-phosphate + CoA + H(+). It carries out the reaction N-acetyl-alpha-D-glucosamine 1-phosphate + UTP + H(+) = UDP-N-acetyl-alpha-D-glucosamine + diphosphate. It functions in the pathway nucleotide-sugar biosynthesis; UDP-N-acetyl-alpha-D-glucosamine biosynthesis; N-acetyl-alpha-D-glucosamine 1-phosphate from alpha-D-glucosamine 6-phosphate (route II): step 2/2. Its pathway is nucleotide-sugar biosynthesis; UDP-N-acetyl-alpha-D-glucosamine biosynthesis; UDP-N-acetyl-alpha-D-glucosamine from N-acetyl-alpha-D-glucosamine 1-phosphate: step 1/1. It participates in bacterial outer membrane biogenesis; LPS lipid A biosynthesis. Catalyzes the last two sequential reactions in the de novo biosynthetic pathway for UDP-N-acetylglucosamine (UDP-GlcNAc). The C-terminal domain catalyzes the transfer of acetyl group from acetyl coenzyme A to glucosamine-1-phosphate (GlcN-1-P) to produce N-acetylglucosamine-1-phosphate (GlcNAc-1-P), which is converted into UDP-GlcNAc by the transfer of uridine 5-monophosphate (from uridine 5-triphosphate), a reaction catalyzed by the N-terminal domain. This is Bifunctional protein GlmU from Shewanella baltica (strain OS185).